Consider the following 248-residue polypeptide: tRNA pseudouridine synthase A (248 aa).

Residue Asp-54 is the Nucleophile of the active site. Tyr-112 contributes to the substrate binding site.

Belongs to the tRNA pseudouridine synthase TruA family. Homodimer.

It catalyses the reaction uridine(38/39/40) in tRNA = pseudouridine(38/39/40) in tRNA. Functionally, formation of pseudouridine at positions 38, 39 and 40 in the anticodon stem and loop of transfer RNAs. This is tRNA pseudouridine synthase A from Geobacillus sp. (strain WCH70).